The following is a 492-amino-acid chain: N-succinylglutamate 5-semialdehyde dehydrogenase (492 aa).

220–225 (GSASTG) is a binding site for NAD(+). Residues E243 and C277 contribute to the active site.

Belongs to the aldehyde dehydrogenase family. AstD subfamily.

The enzyme catalyses N-succinyl-L-glutamate 5-semialdehyde + NAD(+) + H2O = N-succinyl-L-glutamate + NADH + 2 H(+). It participates in amino-acid degradation; L-arginine degradation via AST pathway; L-glutamate and succinate from L-arginine: step 4/5. Functionally, catalyzes the NAD-dependent reduction of succinylglutamate semialdehyde into succinylglutamate. This is N-succinylglutamate 5-semialdehyde dehydrogenase from Salmonella paratyphi B (strain ATCC BAA-1250 / SPB7).